Reading from the N-terminus, the 876-residue chain is Valine--tRNA ligase (876 aa).

A 'HIGH' region motif is present at residues proline 43 to histidine 53. The 'KMSKS' region motif lies at lysine 534–serine 538. Lysine 537 is a binding site for ATP. Residues proline 847–serine 876 adopt a coiled-coil conformation.

It belongs to the class-I aminoacyl-tRNA synthetase family. ValS type 1 subfamily. In terms of assembly, monomer.

It localises to the cytoplasm. The enzyme catalyses tRNA(Val) + L-valine + ATP = L-valyl-tRNA(Val) + AMP + diphosphate. In terms of biological role, catalyzes the attachment of valine to tRNA(Val). As ValRS can inadvertently accommodate and process structurally similar amino acids such as threonine, to avoid such errors, it has a 'posttransfer' editing activity that hydrolyzes mischarged Thr-tRNA(Val) in a tRNA-dependent manner. This is Valine--tRNA ligase from Christiangramia forsetii (strain DSM 17595 / CGMCC 1.15422 / KT0803) (Gramella forsetii).